Here is a 452-residue protein sequence, read N- to C-terminus: Transcription factor PERIANTHIA (452 aa).

The bZIP domain maps to 164 to 227; that stretch reads DQRTLRRLAQ…RGVSADHTHL (64 aa). The interval 166–186 is basic motif; sequence RTLRRLAQNREAARKSRLRKK. A leucine-zipper region spans residues 192-206; the sequence is LENSRIRLAQLEEEL. The DOG1 domain occupies 233-449; that stretch reads VFSFELEYTR…RALSSLWLAR (217 aa).

Belongs to the bZIP family. As to quaternary structure, interacts with GRXC7/ROXY1. Interacts with BOP1 and BOP2.

The protein resides in the nucleus. Its function is as follows. Transcriptional activator involved in the determination of floral organ number. Acts to determine floral organ patterning by establishing floral organ primordia in specific numbers and positions. Plays a role in regulating stem cell fate by directly controlling AG expression. Binds to the 5'-AAGAAT-3' cis-acting element found in AG promoter. Might represent a target for a post-translational modification by GRXC7/ROXY1. This Arabidopsis thaliana (Mouse-ear cress) protein is Transcription factor PERIANTHIA (PAN).